Consider the following 135-residue polypeptide: Small ribosomal subunit protein uS12 (135 aa).

Asp89 carries the post-translational modification 3-methylthioaspartic acid. The disordered stretch occupies residues 101-135 (SLDTSGVADRKQSRSKYGAKQPKAGAAAPAKGKGR). A compositionally biased stretch (low complexity) spans 118–135 (GAKQPKAGAAAPAKGKGR).

This sequence belongs to the universal ribosomal protein uS12 family. As to quaternary structure, part of the 30S ribosomal subunit. Contacts proteins S8 and S17. May interact with IF1 in the 30S initiation complex.

With S4 and S5 plays an important role in translational accuracy. Functionally, interacts with and stabilizes bases of the 16S rRNA that are involved in tRNA selection in the A site and with the mRNA backbone. Located at the interface of the 30S and 50S subunits, it traverses the body of the 30S subunit contacting proteins on the other side and probably holding the rRNA structure together. The combined cluster of proteins S8, S12 and S17 appears to hold together the shoulder and platform of the 30S subunit. In Chlorobium limicola (strain DSM 245 / NBRC 103803 / 6330), this protein is Small ribosomal subunit protein uS12.